A 172-amino-acid polypeptide reads, in one-letter code: Shikimate kinase (172 aa).

An ATP-binding site is contributed by 14–19 (GAGKTT). Thr18 contributes to the Mg(2+) binding site. Residues Asp36, Arg60, and Gly82 each coordinate substrate. An ATP-binding site is contributed by Arg119. Position 137 (Arg137) interacts with substrate.

The protein belongs to the shikimate kinase family. As to quaternary structure, monomer. Requires Mg(2+) as cofactor.

The protein resides in the cytoplasm. It catalyses the reaction shikimate + ATP = 3-phosphoshikimate + ADP + H(+). Its pathway is metabolic intermediate biosynthesis; chorismate biosynthesis; chorismate from D-erythrose 4-phosphate and phosphoenolpyruvate: step 5/7. Catalyzes the specific phosphorylation of the 3-hydroxyl group of shikimic acid using ATP as a cosubstrate. This chain is Shikimate kinase, found in Thermobifida fusca (strain YX).